A 913-amino-acid polypeptide reads, in one-letter code: Isoleucine--tRNA ligase (913 aa).

Positions 57–67 match the 'HIGH' region motif; the sequence is PYANGDIHLGT. An L-isoleucyl-5'-AMP-binding site is contributed by E549. Residues 590–594 carry the 'KMSKS' region motif; it reads KMSKS. K593 lines the ATP pocket. Zn(2+) is bound by residues C881, C884, C901, and C904.

Belongs to the class-I aminoacyl-tRNA synthetase family. IleS type 1 subfamily. Monomer. Requires Zn(2+) as cofactor.

Its subcellular location is the cytoplasm. The enzyme catalyses tRNA(Ile) + L-isoleucine + ATP = L-isoleucyl-tRNA(Ile) + AMP + diphosphate. Functionally, catalyzes the attachment of isoleucine to tRNA(Ile). As IleRS can inadvertently accommodate and process structurally similar amino acids such as valine, to avoid such errors it has two additional distinct tRNA(Ile)-dependent editing activities. One activity is designated as 'pretransfer' editing and involves the hydrolysis of activated Val-AMP. The other activity is designated 'posttransfer' editing and involves deacylation of mischarged Val-tRNA(Ile). The polypeptide is Isoleucine--tRNA ligase (Fervidobacterium nodosum (strain ATCC 35602 / DSM 5306 / Rt17-B1)).